The primary structure comprises 261 residues: Probable pectin methylesterase CGR2 (261 aa).

Topologically, residues 1 to 35 (MARRQVGSTRRVGDGGSFPFAGALHSKSRSSPLLS) are cytoplasmic. A helical transmembrane segment spans residues 36-56 (ICLVLVGACLLIGYAYSGPGI). Topologically, residues 57 to 261 (FKSIKEVSKV…CQVFHLKPLH (205 aa)) are lumenal. Asparagine 174 is a glycosylation site (N-linked (GlcNAc...) asparagine).

The protein belongs to the class I-like SAM-binding methyltransferase superfamily.

It localises to the golgi apparatus membrane. Its function is as follows. Together with CGR3, required for homogalacturonan pectins (HG) methylesterification in the Golgi apparatus prior to integration into cell walls, essential for general growth and development. Promotes rosette growth. Impacts carbon (C) partitioning, photosynthesis and respiration efficiency by influencing leaf mesophyll cell walls morphology and physiology; pectin methylesterification modulates both expansion and positioning of cells in leaves, probably by changing cell walls plasticity. The polypeptide is Probable pectin methylesterase CGR2 (Arabidopsis thaliana (Mouse-ear cress)).